Reading from the N-terminus, the 212-residue chain is Large ribosomal subunit protein uL3 (212 aa).

The segment at 147–166 is disordered; the sequence is GSTGQNQSPGKVFKGKKMPG. Gln153 bears the N5-methylglutamine mark.

The protein belongs to the universal ribosomal protein uL3 family. As to quaternary structure, part of the 50S ribosomal subunit. Forms a cluster with proteins L14 and L19. In terms of processing, methylated by PrmB.

One of the primary rRNA binding proteins, it binds directly near the 3'-end of the 23S rRNA, where it nucleates assembly of the 50S subunit. This Psychrobacter sp. (strain PRwf-1) protein is Large ribosomal subunit protein uL3.